We begin with the raw amino-acid sequence, 273 residues long: Dermonecrotic toxin SdSicTox-betaIIB1bxiv (273 aa).

H4 is a catalytic residue. Residues E24 and D26 each contribute to the Mg(2+) site. Residue H40 is the Nucleophile of the active site. 2 cysteine pairs are disulfide-bonded: C44/C50 and C46/C189. Position 84 (D84) interacts with Mg(2+).

The protein belongs to the arthropod phospholipase D family. Class II subfamily. The cofactor is Mg(2+). As to expression, expressed by the venom gland.

Its subcellular location is the secreted. It carries out the reaction an N-(acyl)-sphingosylphosphocholine = an N-(acyl)-sphingosyl-1,3-cyclic phosphate + choline. It catalyses the reaction an N-(acyl)-sphingosylphosphoethanolamine = an N-(acyl)-sphingosyl-1,3-cyclic phosphate + ethanolamine. The catalysed reaction is a 1-acyl-sn-glycero-3-phosphocholine = a 1-acyl-sn-glycero-2,3-cyclic phosphate + choline. The enzyme catalyses a 1-acyl-sn-glycero-3-phosphoethanolamine = a 1-acyl-sn-glycero-2,3-cyclic phosphate + ethanolamine. In terms of biological role, dermonecrotic toxins cleave the phosphodiester linkage between the phosphate and headgroup of certain phospholipids (sphingolipid and lysolipid substrates), forming an alcohol (often choline) and a cyclic phosphate. This toxin acts on sphingomyelin (SM). It may also act on ceramide phosphoethanolamine (CPE), lysophosphatidylcholine (LPC) and lysophosphatidylethanolamine (LPE), but not on lysophosphatidylserine (LPS), and lysophosphatidylglycerol (LPG). It acts by transphosphatidylation, releasing exclusively cyclic phosphate products as second products. Induces dermonecrosis, hemolysis, increased vascular permeability, edema, inflammatory response, and platelet aggregation. The chain is Dermonecrotic toxin SdSicTox-betaIIB1bxiv from Sicarius cf. damarensis (strain GJB-2008) (Six-eyed sand spider).